Reading from the N-terminus, the 185-residue chain is Casparian strip membrane protein 5 (185 aa).

The Cytoplasmic segment spans residues 1-25 (MKAEAVESGEASTIIAAPKRGINRG). A helical membrane pass occupies residues 26 to 46 (ISIADLILRGVAAIGTFASAL). Residues 47 to 75 (TMGTTSETLTIFTQPIMIRAKYNDLPSLT) are Extracellular-facing. A helical transmembrane segment spans residues 76 to 96 (FFVIANSIVCGYLVLSIPLSI). The Cytoplasmic segment spans residues 97–108 (SHFIRREARITR). The chain crosses the membrane as a helical span at residues 109-129 (IILVIFDTAMVELLTAGASAA). Residues 130 to 160 (TVVVYLAHKRNANWLAICQQFNNFCERISGS) lie on the Extracellular side of the membrane. Residues 161-181 (LIGSFASIIMIMLIIITSAVA) form a helical membrane-spanning segment. Residues 182-185 (LSRH) lie on the Cytoplasmic side of the membrane.

This sequence belongs to the Casparian strip membrane proteins (CASP) family. In terms of assembly, homodimer and heterodimers.

The protein localises to the cell membrane. Regulates membrane-cell wall junctions and localized cell wall deposition. Required for establishment of the Casparian strip membrane domain (CSD) and the subsequent formation of Casparian strips, a cell wall modification of the root endodermis that determines an apoplastic barrier between the intraorganismal apoplasm and the extraorganismal apoplasm and prevents lateral diffusion. The sequence is that of Casparian strip membrane protein 5 from Populus trichocarpa (Western balsam poplar).